Consider the following 433-residue polypeptide: 23S rRNA (uracil(1939)-C(5))-methyltransferase RlmD (433 aa).

A TRAM domain is found at 10 to 68 (RTTTRQIITVSVNDLDSFGQGVARHNGKTLFIPGLLPQENAEVAVTEDKKQYARAKVVR). [4Fe-4S] cluster is bound by residues C81, C87, C90, and C162. Positions 265, 294, 299, 315, 342, and 363 each coordinate S-adenosyl-L-methionine. The active-site Nucleophile is C389.

Belongs to the class I-like SAM-binding methyltransferase superfamily. RNA M5U methyltransferase family. RlmD subfamily.

The enzyme catalyses uridine(1939) in 23S rRNA + S-adenosyl-L-methionine = 5-methyluridine(1939) in 23S rRNA + S-adenosyl-L-homocysteine + H(+). Its function is as follows. Catalyzes the formation of 5-methyl-uridine at position 1939 (m5U1939) in 23S rRNA. The polypeptide is 23S rRNA (uracil(1939)-C(5))-methyltransferase RlmD (Shigella flexneri serotype 5b (strain 8401)).